The following is a 200-amino-acid chain: MLDVIELDFDYHDQPLLQQISFHLPAGGLLHLKGSNGAGKTTLLKLIAGLLNPEKGEILFERQSIKKDLCTYQKQLCFVGHRSGINPYLTLRENCLYDIHFSPGAVGITELCRLFSLEHLIDYPCGLLSSGQKRQVALLRLWMSKAKLWLLDEPLVALDELSLLTIITKIQEHRAKGGAVLLTSHQDLPLNKADYEEYHL.

The region spanning 2 to 200 (LDVIELDFDY…NKADYEEYHL (199 aa)) is the ABC transporter domain. 34–41 (GSNGAGKT) contacts ATP.

This sequence belongs to the ABC transporter superfamily. CcmA exporter (TC 3.A.1.107) family. The complex is composed of two ATP-binding proteins (CcmA) and two transmembrane proteins (CcmB).

The protein localises to the cell inner membrane. The catalysed reaction is heme b(in) + ATP + H2O = heme b(out) + ADP + phosphate + H(+). Part of the ABC transporter complex CcmAB involved in the biogenesis of c-type cytochromes; once thought to export heme, this seems not to be the case, but its exact role is uncertain. Responsible for energy coupling to the transport system. This chain is Cytochrome c biogenesis ATP-binding export protein CcmA, found in Legionella pneumophila (strain Paris).